The sequence spans 132 residues: MSKMTVEVVTPERVVYSGQAEMVIARGLQGEIGIMPNHMPLVTPLKTAPVRIKTEGDKEVKMAVSGGFMEVRGDKVTILAETAELPGDIDVERAKAARERAEKRLTEKYAELDVKRAERALQRAMARLDVSK.

It belongs to the ATPase epsilon chain family. As to quaternary structure, F-type ATPases have 2 components, CF(1) - the catalytic core - and CF(0) - the membrane proton channel. CF(1) has five subunits: alpha(3), beta(3), gamma(1), delta(1), epsilon(1). CF(0) has three main subunits: a, b and c.

The protein localises to the cell membrane. Produces ATP from ADP in the presence of a proton gradient across the membrane. The sequence is that of ATP synthase epsilon chain from Brevibacillus brevis (strain 47 / JCM 6285 / NBRC 100599).